Consider the following 483-residue polypeptide: Isocitrate dehydrogenase [NADP] (483 aa).

T74 provides a ligand contact to NADP(+). D-threo-isocitrate is bound by residues S83, N85, R89, R99, and R121. D232 is a binding site for Mg(2+). Residues 264 to 270 and N277 contribute to the NADP(+) site; that span reads HGSAPDI.

It belongs to the isocitrate and isopropylmalate dehydrogenases family. Homodimer. Mg(2+) serves as cofactor. The cofactor is Mn(2+).

The enzyme catalyses D-threo-isocitrate + NADP(+) = 2-oxoglutarate + CO2 + NADPH. In terms of biological role, catalyzes the oxidative decarboxylation of isocitrate to 2-oxoglutarate and carbon dioxide with the concomitant reduction of NADP(+). The polypeptide is Isocitrate dehydrogenase [NADP] (icd) (Rickettsia conorii (strain ATCC VR-613 / Malish 7)).